Reading from the N-terminus, the 317-residue chain is Petrobactin-binding protein YclQ (317 aa).

The first 19 residues, 1–19, serve as a signal peptide directing secretion; it reads MKKFALLFIALVTAVVISA. Residue C20 is the site of N-palmitoyl cysteine attachment. C20 carries S-diacylglycerol cysteine lipidation. In terms of domain architecture, Fe/B12 periplasmic-binding spans 56-317; the sequence is KVVVFDFGSL…IKEVKDGLEK (262 aa).

It belongs to the bacterial solute-binding protein 8 family. As to quaternary structure, the complex is composed of two ATP-binding proteins (YclP), two transmembrane proteins (YclN and YclO) and a solute-binding protein (YclQ). Interacts with FloT.

It localises to the cell membrane. The protein resides in the membrane raft. Its function is as follows. Part of the ABC transporter complex YclNOPQ involved in uptake of ferric-petrobactin. Petrobactin is a photoreactive 3,4-catecholate siderophore produced by many members of the B.cereus group, including B.anthracis. Binds selectively iron-free and ferric petrobactin and the petrobactin precursor 3,4-dihydroxybenzoic acid (3,4-DHB). The polypeptide is Petrobactin-binding protein YclQ (yclQ) (Bacillus subtilis (strain 168)).